A 210-amino-acid chain; its full sequence is Late transcription elongation factor OPG110 (210 aa).

The segment covering 25 to 36 (RNSAENKDKNED) has biased composition (basic and acidic residues). Residues 25–102 (RNSAENKDKN…PPPSSSPGVG (78 aa)) form a disordered region. Over residues 49–68 (PKTKRTTTPRKPAATKRSTK) the composition is skewed to basic residues.

Belongs to the orthopoxvirus OPG110 family. As to quaternary structure, interacts with the DNA polymerase processivity factor A20. Interacts with B1R kinase. Interacts with the late transcription factors VLTF-1 and VLTF-3. Interacts with the late transcription elongation factor G2. Interacts with itself. Might be part of a transcription complex composed at least of G2, A18, and H5. Post-translationally, phosphorylated at multiple sites. Phosphorylation is necessary for cleavage activity. Phosphorylated by the viral B1R and F10 kinases.

The protein resides in the virion. Its subcellular location is the host cytoplasm. Its function is as follows. Involved in the co-transcriptional or post-transcriptional endoribonucleolytic cleavage that generates sequence-homogeneous 3' ends during late transcription. Involved in postreplicative transcription elongation on intermediate and late genes. Also involved in DNA replication and in multiple steps of virion morphogenesis. Required both for inclusion of virosoplasm into crescents as well as for maturation of immature virions (IV) into mature virions (MV). The chain is Late transcription elongation factor OPG110 (OPG110) from Cynomys gunnisoni (Gunnison's prairie dog).